The following is a 385-amino-acid chain: Mannitol-1-phosphate 5-dehydrogenase (385 aa).

Residue 3-14 (DVHFGAGNIGRG) participates in NAD(+) binding.

This sequence belongs to the mannitol dehydrogenase family.

It catalyses the reaction D-mannitol 1-phosphate + NAD(+) = beta-D-fructose 6-phosphate + NADH + H(+). The sequence is that of Mannitol-1-phosphate 5-dehydrogenase from Lactiplantibacillus plantarum (strain ATCC BAA-793 / NCIMB 8826 / WCFS1) (Lactobacillus plantarum).